The chain runs to 979 residues: Putative transcription initiation factor TFIID 111 kDa subunit (979 aa).

At S244 the chain carries Phosphoserine.

As to quaternary structure, TFIID is composed of TATA binding protein (TBP) and a number of TBP-associated factors (TAFs).

The protein resides in the nucleus. TAFs are components of the transcription factor IID (TFIID) complex that are essential for mediating regulation of RNA polymerase transcription. This Schizosaccharomyces pombe (strain 972 / ATCC 24843) (Fission yeast) protein is Putative transcription initiation factor TFIID 111 kDa subunit.